The sequence spans 212 residues: Cytidylate kinase (212 aa).

7 to 15 (GPAASGKGT) is a binding site for ATP.

It belongs to the cytidylate kinase family. Type 1 subfamily.

Its subcellular location is the cytoplasm. It carries out the reaction CMP + ATP = CDP + ADP. It catalyses the reaction dCMP + ATP = dCDP + ADP. The chain is Cytidylate kinase from Rhodopseudomonas palustris (strain ATCC BAA-98 / CGA009).